The chain runs to 472 residues: Glutamate synthase [NADPH] small chain (472 aa).

The 32-residue stretch at 41–72 (QDAAAQAHRCLHCGNPYCEWKCPVHNYIPNWL) folds into the 4Fe-4S ferredoxin-type domain. The [4Fe-4S] cluster site is built by C50, C53, C58, and C62.

Requires [4Fe-4S] cluster as cofactor.

The catalysed reaction is 2 L-glutamate + NADP(+) = L-glutamine + 2-oxoglutarate + NADPH + H(+). It functions in the pathway amino-acid biosynthesis; L-glutamate biosynthesis via GLT pathway; L-glutamate from 2-oxoglutarate and L-glutamine (NADP(+) route): step 1/1. The protein operates within energy metabolism; nitrogen metabolism. In terms of biological role, catalyzes the conversion of L-glutamine and 2-oxoglutarate into two molecules of L-glutamate. This is Glutamate synthase [NADPH] small chain from Halomonas elongata (strain ATCC 33173 / DSM 2581 / NBRC 15536 / NCIMB 2198 / 1H9).